Reading from the N-terminus, the 539-residue chain is Trigger factor (539 aa).

Residues 163–252 (GDQLTVQIET…VLDVQERLLP (90 aa)) form the PPIase FKBP-type domain. Composition is skewed to low complexity over residues 434 to 447 (SFEQAASPEAASEP) and 475 to 484 (AASPEAASEP). The segment at 434 to 539 (SFEQAASPEA…DVATPEARTE (106 aa)) is disordered. Residues 509–528 (TETPIVSQEENGESVENQSV) show a composition bias toward polar residues.

This sequence belongs to the FKBP-type PPIase family. Tig subfamily.

The protein resides in the cytoplasm. The enzyme catalyses [protein]-peptidylproline (omega=180) = [protein]-peptidylproline (omega=0). Its function is as follows. Involved in protein export. Acts as a chaperone by maintaining the newly synthesized protein in an open conformation. Functions as a peptidyl-prolyl cis-trans isomerase. This chain is Trigger factor, found in Roseiflexus sp. (strain RS-1).